We begin with the raw amino-acid sequence, 119 residues long: Large ribosomal subunit protein bL19 (119 aa).

It belongs to the bacterial ribosomal protein bL19 family.

This protein is located at the 30S-50S ribosomal subunit interface and may play a role in the structure and function of the aminoacyl-tRNA binding site. This is Large ribosomal subunit protein bL19 from Limosilactobacillus fermentum (strain NBRC 3956 / LMG 18251) (Lactobacillus fermentum).